Reading from the N-terminus, the 729-residue chain is Catalase-peroxidase (729 aa).

A disordered region spans residues 1 to 26 (MTMDQKTDNAGKCPVAHTAPRGRSNR). A cross-link (tryptophyl-tyrosyl-methioninium (Trp-Tyr) (with M-245)) is located at residues 97 to 219 (WHSAGTYRIT…LAAVQMGLIY (123 aa)). H98 functions as the Proton acceptor in the catalytic mechanism. The tryptophyl-tyrosyl-methioninium (Tyr-Met) (with W-97) cross-link spans 219 to 245 (YVNPEGPNGNPDPVAAAHDIRETFARM). H260 is a heme b binding site.

The protein belongs to the peroxidase family. Peroxidase/catalase subfamily. In terms of assembly, homodimer or homotetramer. The cofactor is heme b. In terms of processing, formation of the three residue Trp-Tyr-Met cross-link is important for the catalase, but not the peroxidase activity of the enzyme.

The enzyme catalyses H2O2 + AH2 = A + 2 H2O. The catalysed reaction is 2 H2O2 = O2 + 2 H2O. Bifunctional enzyme with both catalase and broad-spectrum peroxidase activity. The chain is Catalase-peroxidase from Sinorhizobium medicae (strain WSM419) (Ensifer medicae).